We begin with the raw amino-acid sequence, 632 residues long: Threonine--tRNA ligase (632 aa).

The TGS domain occupies 1 to 59 (MIRITFLAKQKVEEYSSRVTGFDILQPDISKEAIALRVNGELYDLSREIESDTEIDVIQ). Residues 240-532 (DHRRIAKDMD…LIEHYAGKFP (293 aa)) are catalytic. The Zn(2+) site is built by Cys-332, His-383, and His-509.

It belongs to the class-II aminoacyl-tRNA synthetase family. In terms of assembly, homodimer. Requires Zn(2+) as cofactor.

Its subcellular location is the cytoplasm. It catalyses the reaction tRNA(Thr) + L-threonine + ATP = L-threonyl-tRNA(Thr) + AMP + diphosphate + H(+). Functionally, catalyzes the attachment of threonine to tRNA(Thr) in a two-step reaction: L-threonine is first activated by ATP to form Thr-AMP and then transferred to the acceptor end of tRNA(Thr). Also edits incorrectly charged L-seryl-tRNA(Thr). This chain is Threonine--tRNA ligase, found in Wolbachia sp. subsp. Brugia malayi (strain TRS).